The chain runs to 173 residues: RNA pyrophosphohydrolase (173 aa).

The region spanning 6–149 is the Nudix hydrolase domain; it reads GFRANVGIIL…KRGVYRRALQ (144 aa). The short motif at 38 to 59 is the Nudix box element; the sequence is GGIDRGETPMDAMYRELWEEVG.

Belongs to the Nudix hydrolase family. RppH subfamily. A divalent metal cation serves as cofactor.

In terms of biological role, accelerates the degradation of transcripts by removing pyrophosphate from the 5'-end of triphosphorylated RNA, leading to a more labile monophosphorylated state that can stimulate subsequent ribonuclease cleavage. The chain is RNA pyrophosphohydrolase from Psychrobacter arcticus (strain DSM 17307 / VKM B-2377 / 273-4).